We begin with the raw amino-acid sequence, 312 residues long: Beta-ketoacyl-[acyl-carrier-protein] synthase III (312 aa).

Catalysis depends on residues C112 and H237. Residues 238–242 form an ACP-binding region; that stretch reads QANIR. Residue N267 is part of the active site.

Belongs to the thiolase-like superfamily. FabH family. As to quaternary structure, homodimer.

The protein resides in the cytoplasm. It carries out the reaction malonyl-[ACP] + acetyl-CoA + H(+) = 3-oxobutanoyl-[ACP] + CO2 + CoA. Its pathway is lipid metabolism; fatty acid biosynthesis. Its function is as follows. Catalyzes the condensation reaction of fatty acid synthesis by the addition to an acyl acceptor of two carbons from malonyl-ACP. Catalyzes the first condensation reaction which initiates fatty acid synthesis and may therefore play a role in governing the total rate of fatty acid production. Possesses both acetoacetyl-ACP synthase and acetyl transacylase activities. Its substrate specificity determines the biosynthesis of branched-chain and/or straight-chain of fatty acids. In Listeria innocua serovar 6a (strain ATCC BAA-680 / CLIP 11262), this protein is Beta-ketoacyl-[acyl-carrier-protein] synthase III.